The following is a 276-amino-acid chain: Large ribosomal subunit protein uL2 (276 aa).

Residues Pro-218–Leu-255 form a disordered region.

Belongs to the universal ribosomal protein uL2 family. As to quaternary structure, part of the 50S ribosomal subunit. Forms a bridge to the 30S subunit in the 70S ribosome.

Functionally, one of the primary rRNA binding proteins. Required for association of the 30S and 50S subunits to form the 70S ribosome, for tRNA binding and peptide bond formation. It has been suggested to have peptidyltransferase activity; this is somewhat controversial. Makes several contacts with the 16S rRNA in the 70S ribosome. In Clostridium tetani (strain Massachusetts / E88), this protein is Large ribosomal subunit protein uL2.